Here is a 523-residue protein sequence, read N- to C-terminus: Light-independent protochlorophyllide reductase subunit B (523 aa).

Position 36 (D36) interacts with [4Fe-4S] cluster. D290 functions as the Proton donor in the catalytic mechanism. 425–426 (GL) lines the substrate pocket.

It belongs to the ChlB/BchB/BchZ family. In terms of assembly, protochlorophyllide reductase is composed of three subunits; ChlL, ChlN and ChlB. Forms a heterotetramer of two ChlB and two ChlN subunits. The cofactor is [4Fe-4S] cluster.

The enzyme catalyses chlorophyllide a + oxidized 2[4Fe-4S]-[ferredoxin] + 2 ADP + 2 phosphate = protochlorophyllide a + reduced 2[4Fe-4S]-[ferredoxin] + 2 ATP + 2 H2O. It participates in porphyrin-containing compound metabolism; chlorophyll biosynthesis (light-independent). In terms of biological role, component of the dark-operative protochlorophyllide reductase (DPOR) that uses Mg-ATP and reduced ferredoxin to reduce ring D of protochlorophyllide (Pchlide) to form chlorophyllide a (Chlide). This reaction is light-independent. The NB-protein (ChlN-ChlB) is the catalytic component of the complex. The chain is Light-independent protochlorophyllide reductase subunit B from Prochlorococcus marinus (strain MIT 9215).